Here is a 507-residue protein sequence, read N- to C-terminus: Rho GTPase-activating protein 19 (507 aa).

The Rho-GAP domain occupies 112–305 (APLTEEGIAQ…FMIKHSQKLF (194 aa)). Disordered stretches follow at residues 344–371 (FLKH…QQHT), 400–419 (KNTP…KKHV), and 483–507 (DLQI…ETSI). Over residues 355 to 369 (SSPSSSTSLQEQTQQ) the composition is skewed to low complexity. Residues 400-413 (KNTPRTPVSDTQVP) show a composition bias toward polar residues. Residues 483–492 (DLQIRKEASS) show a composition bias toward basic and acidic residues.

In terms of biological role, GTPase activator for the Rho-type GTPases by converting them to an inactive GDP-bound state. The chain is Rho GTPase-activating protein 19 (arhgap19) from Xenopus laevis (African clawed frog).